The chain runs to 257 residues: 4-hydroxy-tetrahydrodipicolinate reductase (257 aa).

NAD(+) is bound by residues 11–16 (GANGRM) and glutamate 37. Arginine 38 lines the NADP(+) pocket. NAD(+) contacts are provided by residues 86–88 (GST) and 110–113 (SGNY). Histidine 144 functions as the Proton donor/acceptor in the catalytic mechanism. Histidine 145 contributes to the (S)-2,3,4,5-tetrahydrodipicolinate binding site. The active-site Proton donor is lysine 148. 154–155 (GT) provides a ligand contact to (S)-2,3,4,5-tetrahydrodipicolinate.

It belongs to the DapB family.

It is found in the cytoplasm. The enzyme catalyses (S)-2,3,4,5-tetrahydrodipicolinate + NAD(+) + H2O = (2S,4S)-4-hydroxy-2,3,4,5-tetrahydrodipicolinate + NADH + H(+). It carries out the reaction (S)-2,3,4,5-tetrahydrodipicolinate + NADP(+) + H2O = (2S,4S)-4-hydroxy-2,3,4,5-tetrahydrodipicolinate + NADPH + H(+). The protein operates within amino-acid biosynthesis; L-lysine biosynthesis via DAP pathway; (S)-tetrahydrodipicolinate from L-aspartate: step 4/4. In terms of biological role, catalyzes the conversion of 4-hydroxy-tetrahydrodipicolinate (HTPA) to tetrahydrodipicolinate. The sequence is that of 4-hydroxy-tetrahydrodipicolinate reductase from Caulobacter vibrioides (strain ATCC 19089 / CIP 103742 / CB 15) (Caulobacter crescentus).